We begin with the raw amino-acid sequence, 151 residues long: Large ribosomal subunit protein uL22c (151 aa).

The protein belongs to the universal ribosomal protein uL22 family. In terms of assembly, part of the 50S ribosomal subunit.

It localises to the plastid. It is found in the chloroplast. Functionally, this protein binds specifically to 23S rRNA. The globular domain of the protein is located near the polypeptide exit tunnel on the outside of the subunit, while an extended beta-hairpin is found that lines the wall of the exit tunnel in the center of the 70S ribosome. The protein is Large ribosomal subunit protein uL22c (rpl22) of Gossypium barbadense (Sea Island cotton).